The chain runs to 225 residues: Ribosomal RNA small subunit methyltransferase G (225 aa).

S-adenosyl-L-methionine is bound by residues Gly89, Leu94, Ile140 to Glu141, and Arg157.

This sequence belongs to the methyltransferase superfamily. RNA methyltransferase RsmG family.

Its subcellular location is the cytoplasm. It catalyses the reaction guanosine(527) in 16S rRNA + S-adenosyl-L-methionine = N(7)-methylguanosine(527) in 16S rRNA + S-adenosyl-L-homocysteine. In terms of biological role, specifically methylates the N7 position of guanine in position 527 of 16S rRNA. This is Ribosomal RNA small subunit methyltransferase G from Psychrobacter sp. (strain PRwf-1).